Here is a 151-residue protein sequence, read N- to C-terminus: Desiccation-related protein PCC27-45 (151 aa).

Belongs to the LEA type 2 family.

The protein is Desiccation-related protein PCC27-45 of Craterostigma plantagineum (Blue gem).